A 40-amino-acid polypeptide reads, in one-letter code: Snaclec tokaracetin subunit beta (40 aa).

Residues C2 and C13 are joined by a disulfide bond. The C-type lectin domain occupies 9–40 (YDEHCYRVFQQKMNWEDAEKFCTQQHKGXHLX).

Belongs to the snaclec family. As to quaternary structure, heterodimer of subunits alpha and beta; disulfide-linked. In terms of tissue distribution, expressed by the venom gland.

It localises to the secreted. Platelet antagonist that specifically and reversibly binds to a site on platelet glycoprotein Ibalpha (GP1BA) close to or identical with the site for vWF binding. It inhibits the binding of vWF to platelets and vWF-dependent shear-induced platelet aggregation. The sequence is that of Snaclec tokaracetin subunit beta from Protobothrops tokarensis (Tokara habu).